A 156-amino-acid polypeptide reads, in one-letter code: Small ribosomal subunit protein uS15 (156 aa).

Positions 1–67 (MARMHTRRRG…GVQGTPIPDV (67 aa)) are disordered. Residues 10–19 (GSSDSDKPAA) show a composition bias toward basic and acidic residues. Over residues 21 to 32 (EPPEWSDVDEDA) the composition is skewed to acidic residues.

This sequence belongs to the universal ribosomal protein uS15 family. Part of the 30S ribosomal subunit.

The polypeptide is Small ribosomal subunit protein uS15 (Haloarcula marismortui (strain ATCC 43049 / DSM 3752 / JCM 8966 / VKM B-1809) (Halobacterium marismortui)).